A 117-amino-acid polypeptide reads, in one-letter code: Immunoglobulin kappa variable 1-12 (117 aa).

The first 22 residues, 1–22 (MDMRVPAQLLGLLLLWFPGSRC), serve as a signal peptide directing secretion. The interval 23–45 (DIQMTQSPSSVSASVGDRVTITC) is framework-1. Residues 24–117 (IQMTQSPSSV…YYCQQANSFP (94 aa)) form the Ig-like domain. Cysteines 45 and 110 form a disulfide. The tract at residues 46-56 (RASQGISSWLA) is complementarity-determining-1. Residues 57–71 (WYQQKPGKAPKLLIY) are framework-2. The interval 72 to 78 (AASSLQS) is complementarity-determining-2. Positions 79–110 (GVPSRFSGSGSGTDFTLTISSLQPEDFATYYC) are framework-3. A complementarity-determining-3 region spans residues 111 to 117 (QQANSFP).

In terms of assembly, immunoglobulins are composed of two identical heavy chains and two identical light chains; disulfide-linked.

Its subcellular location is the secreted. It localises to the cell membrane. In terms of biological role, v region of the variable domain of immunoglobulin light chains that participates in the antigen recognition. Immunoglobulins, also known as antibodies, are membrane-bound or secreted glycoproteins produced by B lymphocytes. In the recognition phase of humoral immunity, the membrane-bound immunoglobulins serve as receptors which, upon binding of a specific antigen, trigger the clonal expansion and differentiation of B lymphocytes into immunoglobulins-secreting plasma cells. Secreted immunoglobulins mediate the effector phase of humoral immunity, which results in the elimination of bound antigens. The antigen binding site is formed by the variable domain of one heavy chain, together with that of its associated light chain. Thus, each immunoglobulin has two antigen binding sites with remarkable affinity for a particular antigen. The variable domains are assembled by a process called V-(D)-J rearrangement and can then be subjected to somatic hypermutations which, after exposure to antigen and selection, allow affinity maturation for a particular antigen. In Homo sapiens (Human), this protein is Immunoglobulin kappa variable 1-12.